We begin with the raw amino-acid sequence, 194 residues long: MARYRGSRVKVIRRLGLLPGFTSKSSNKPQNNNKQLSQYGFHLQEKQKLRYNYGISEHELIKYVKSARRKRGNSGDKLLQLLEMRLDTLLYRTGFVPTVASARQLISHGHINVNGKKVDIPGFNCSISDKIVINKEILKSLNDKNNSFSTLNCSHLVLNELNNDLTITVTNLPDIQVLGYSINILLVLEYYSGK.

The 61-residue stretch at 84–144 (MRLDTLLYRT…KEILKSLNDK (61 aa)) folds into the S4 RNA-binding domain.

This sequence belongs to the universal ribosomal protein uS4 family. As to quaternary structure, part of the 30S ribosomal subunit. Contacts protein S5. The interaction surface between S4 and S5 is involved in control of translational fidelity.

The protein resides in the plastid. Its subcellular location is the chloroplast. Functionally, one of the primary rRNA binding proteins, it binds directly to 16S rRNA where it nucleates assembly of the body of the 30S subunit. Its function is as follows. With S5 and S12 plays an important role in translational accuracy. This chain is Small ribosomal subunit protein uS4c (rps4), found in Bigelowiella natans (Pedinomonas minutissima).